A 216-amino-acid polypeptide reads, in one-letter code: Noggin-1 (216 aa).

Positions 1-18 are cleaved as a signal peptide; that stretch reads MDFPRFLLSAYLLLLSFA. Residue Asn-55 is glycosylated (N-linked (GlcNAc...) asparagine).

This sequence belongs to the noggin family. As to quaternary structure, homodimer; disulfide-linked.

The protein localises to the secreted. Its function is as follows. Inhibitor of bone morphogenetic proteins (BMP) signaling. May play an important role in the dorsoventral patterning of the embryo. This is Noggin-1 (nog1) from Danio rerio (Zebrafish).